The sequence spans 112 residues: MKKVLFLLLACAAVAFAAETNAPVEQEAINVWIKAFSVLAAGLGLGVAALGGAIGMGNTAAATIAGTARNPGLGPKLMTTMFIALAMIEAQVIYALVIALIALYANPFIVLQ.

The next 2 helical transmembrane spans lie at 36-56 and 81-101; these read FSVL…AIGM and MFIA…IALI.

It belongs to the ATPase C chain family. As to quaternary structure, F-type ATPases have 2 components, F(1) - the catalytic core - and F(0) - the membrane proton channel. F(1) has five subunits: alpha(3), beta(3), gamma(1), delta(1), epsilon(1). F(0) has three main subunits: a(1), b(2) and c(10-14). The alpha and beta chains form an alternating ring which encloses part of the gamma chain. F(1) is attached to F(0) by a central stalk formed by the gamma and epsilon chains, while a peripheral stalk is formed by the delta and b chains.

The protein localises to the cell inner membrane. F(1)F(0) ATP synthase produces ATP from ADP in the presence of a proton or sodium gradient. F-type ATPases consist of two structural domains, F(1) containing the extramembraneous catalytic core and F(0) containing the membrane proton channel, linked together by a central stalk and a peripheral stalk. During catalysis, ATP synthesis in the catalytic domain of F(1) is coupled via a rotary mechanism of the central stalk subunits to proton translocation. In terms of biological role, key component of the F(0) channel; it plays a direct role in translocation across the membrane. A homomeric c-ring of between 10-14 subunits forms the central stalk rotor element with the F(1) delta and epsilon subunits. In Campylobacter jejuni subsp. jejuni serotype O:6 (strain 81116 / NCTC 11828), this protein is ATP synthase subunit c.